The chain runs to 407 residues: Transcriptional regulator alnR (407 aa).

A DNA-binding region (zn(2)-C6 fungal-type) is located at residues 23–53 (SCDTCQEAKVKCSQHKPSCHRCLRHRQPCVY). A disordered region spans residues 53 to 85 (YSPQRRSGRPPKRPSPSSRLGPESNNSGDDIHN). Residues 75–85 (ESNNSGDDIHN) are compositionally biased toward polar residues.

It localises to the nucleus. In terms of biological role, transcriptional regulator involved in the positive regulation of the expression of the gene cluster that mediates the biosynthesis of asperlin, a polyketide showing anti-inflammatory, antitumor and antibiotic activities. This is Transcriptional regulator alnR from Emericella nidulans (strain FGSC A4 / ATCC 38163 / CBS 112.46 / NRRL 194 / M139) (Aspergillus nidulans).